We begin with the raw amino-acid sequence, 431 residues long: Enolase (431 aa).

(2R)-2-phosphoglycerate is bound at residue glutamine 166. Residue glutamate 208 is the Proton donor of the active site. 3 residues coordinate Mg(2+): aspartate 245, glutamate 288, and aspartate 315. 4 residues coordinate (2R)-2-phosphoglycerate: lysine 340, arginine 369, serine 370, and lysine 391. Residue lysine 340 is the Proton acceptor of the active site.

This sequence belongs to the enolase family. The cofactor is Mg(2+).

The protein localises to the cytoplasm. It localises to the secreted. The protein resides in the cell surface. The enzyme catalyses (2R)-2-phosphoglycerate = phosphoenolpyruvate + H2O. The protein operates within carbohydrate degradation; glycolysis; pyruvate from D-glyceraldehyde 3-phosphate: step 4/5. Functionally, catalyzes the reversible conversion of 2-phosphoglycerate (2-PG) into phosphoenolpyruvate (PEP). It is essential for the degradation of carbohydrates via glycolysis. The protein is Enolase of Clostridium botulinum (strain Loch Maree / Type A3).